Consider the following 356-residue polypeptide: Histidinol-phosphate aminotransferase (356 aa).

K214 bears the N6-(pyridoxal phosphate)lysine mark.

This sequence belongs to the class-II pyridoxal-phosphate-dependent aminotransferase family. Histidinol-phosphate aminotransferase subfamily. Homodimer. The cofactor is pyridoxal 5'-phosphate.

It carries out the reaction L-histidinol phosphate + 2-oxoglutarate = 3-(imidazol-4-yl)-2-oxopropyl phosphate + L-glutamate. The protein operates within amino-acid biosynthesis; L-histidine biosynthesis; L-histidine from 5-phospho-alpha-D-ribose 1-diphosphate: step 7/9. The chain is Histidinol-phosphate aminotransferase from Escherichia coli O9:H4 (strain HS).